Here is a 370-residue protein sequence, read N- to C-terminus: Polyadenylate-binding protein 4-like (370 aa).

RRM domains lie at 10–88, 98–174, 190–267, and 293–369; these read ASLY…WSQR, GNVF…RFKN, TNVY…RAQK, and VKLY…LAQR.

Belongs to the polyadenylate-binding protein type-1 family.

In terms of biological role, may bind RNA. In Homo sapiens (Human), this protein is Polyadenylate-binding protein 4-like (PABPC4L).